We begin with the raw amino-acid sequence, 221 residues long: Adenylate kinase (221 aa).

ATP is bound at residue 10–15 (GAGKGT). An NMP region spans residues 30 to 59 (STGDMLRAAVKAGTPLGIEAKKVMDAGGLV). Residues Thr-31, Arg-36, 57–59 (GLV), 85–88 (GFPR), and Gln-92 contribute to the AMP site. An LID region spans residues 122–159 (GRRVHVASGRTYHVKFNPPKADMVDDETGEALIQRDDD). ATP is bound by residues Arg-123 and 132–133 (TY). Residues Arg-156 and Arg-167 each contribute to the AMP site. Residue Gly-207 participates in ATP binding.

The protein belongs to the adenylate kinase family. In terms of assembly, monomer.

It localises to the cytoplasm. The enzyme catalyses AMP + ATP = 2 ADP. It participates in purine metabolism; AMP biosynthesis via salvage pathway; AMP from ADP: step 1/1. Its function is as follows. Catalyzes the reversible transfer of the terminal phosphate group between ATP and AMP. Plays an important role in cellular energy homeostasis and in adenine nucleotide metabolism. The sequence is that of Adenylate kinase from Cupriavidus metallidurans (strain ATCC 43123 / DSM 2839 / NBRC 102507 / CH34) (Ralstonia metallidurans).